Consider the following 368-residue polypeptide: MTLTRPLALISALAALILALPADAERIKDLTTIQGVRSNQLIGYGLVVGLDGTGDQTTQTPFTVQSIVSMMQQMGINLPSGTNLQLRNVAAVMVTGNLPPFAQPGQPMDVTVSSMGNARSLRGGTLLMTPLKGADNQVYAMAQGNLVIGGAGAGASGTSTQINHLGAGRISAGAIVERAVPSQLTETSTIRLELKEADFSTASMVVDAINKRFGNGTATPLDGRVIQVQPPMDINRIAFIGNLENLDVKPSQGPAKVILNARTGSVVMNQAVTLDDCAISHGNLSVVINTAPAISQPGPFSGGQTVATQVSQVEINKEPGQVIKLDKGTSLADVVKALNAIGATPQDLVAILQAMKAAGSLRADLEII.

A signal peptide spans 1-24; that stretch reads MTLTRPLALISALAALILALPADA.

Belongs to the FlgI family. In terms of assembly, the basal body constitutes a major portion of the flagellar organelle and consists of four rings (L,P,S, and M) mounted on a central rod.

Its subcellular location is the periplasm. It localises to the bacterial flagellum basal body. Its function is as follows. Assembles around the rod to form the L-ring and probably protects the motor/basal body from shearing forces during rotation. The sequence is that of Flagellar P-ring protein from Methylobacillus flagellatus (strain ATCC 51484 / DSM 6875 / VKM B-1610 / KT).